Consider the following 2560-residue polypeptide: MAQSAQIQDIYPLSHMQEGMLFHSLMDFSSKAYIEQTSFTITGNLCVDSFQKSLNLLVSRYDIFRTIFIKEVPDLTGPQQVVLSNRELTVYREDISRLADQEQQTLIDAFMTKDREKGFDLQKDPLMRLALFDRGDSQYTCVWTHHHIIMDGWCLGIILKEFFSMYDSLKNNSPVQLGSTVPYSRYIEWLGEQDQEETAAYWSEYLKEYGNTASIPRIKRRTADGNYKADQVSFSLAPDMVEKLTEAAQNWGVTLNTLFMSIWGVLLHRYNAADDAVFGSVISGRPSAIDGIESMVGLFINTVPVRIRSAEGITFSSLVKAVQEDILSSEQHGYYPLYEIQNHSPLKQGLIDHIFVFENYPVQLHQALSVESENDEGALKLSDISMSEQTNYDFNIVIVPGESFYIKFSYNADVYEREEMLRIQGHLKQALDCILTNPDVAVSDINIVPPEEQQVIQLFNETERPYVNKTIPQLFEEQAHKTPEAAALKMGNECWTYRQLQVRANQIAHALIEKGVGSGDIVAVMMGRSMEMPAALLGIWKAGGAYMPLDPHFPAERLSFLLKDSQAAQLLIEEDLISLIPPSYEGNTITIEHTESYQTEAPNMPPGDLAYLIYTSGTTGRPKGVLVDHHGIANTLQWRREEYSMTEQDISLHLFSYVFDGCVTSLFTPLLSGACVLLTTDDEAKDVLALKRKIARYKVSHMIIVPSLYRVLLEVMTADDAKSLRIVTFAGEAVTPDLLELNQIICPSAELANEYGPTENSVATTILRHLNKKERITIGHPIRNTKVFVLHGNQMQPIGAAGELCISGAGLARGYYKQQELTQKAFSDHPFLEGERLYRTGDAGRFLPDGTIEYIGRFDDQVKIRGYRIELREIETVLRQAPGVKEAAVLARDVSAEEKELVAYIVPEKGNSLPDLYQHLAGTLPSYMIPASIINISQMPLTSSGKLDRFALPEPENNTSVTYMAPRTLIEADLAHIWEDVLNKQHIGIRDDFFQLGGQSLKAAALVSRIHKKLNVELPLSEVFSYPTVESMAVKLMSLKEHAFTQIEPADQRDVYPLSFSQKRLYALHQLADDSTGYNMPAVLELRGNLNRQRLRSVLTELVNRHEALRTVFVLDRDEPVQIIYPEMAFDLKELEMESEQMLESAIETFIKPFYLSSGPLFRACVITMGNNRGFLLLDMHHIIADGVSMSTLVQEFTDLYCGKELPALNLHYKDFAVWQQEKHPKELYKKQEAYWLGQLGGSLPTLELPLDKTRPRLPDFRGGTIEVNIDKDMADELHRLMAETGTTLYMILLAVYSILLSKLSGQEDIVVGSPAAGRPHADLERVIGMFVNTLAMRSKPEGHKTFSSYLHDIRHLALTAYEHQDYPFEELADKLDTNREVNRNPLFDAMLVLQSSEDFRFEVPGLSISSVTPKHDISKFDLTLHAEEHLSGIRCRFEYSTALFEEETITQWASYFIELVKGVTADTEMRISNMQLLPAAERRLLLEKMGQYAAYPRNENIVSLFEKQVAQYPEHIAVVCGHSQLTYRDLNEKAERAAAMLIKQGVRTGDIVGLMLDRSPDMIIGVLSILKAGGAYLPIDPEYPKERISFMLNDSGAKLLLTERGLNKPADYTGHILYIDECENNSIPADVNIEEIVTDQPAYVIYTSGTTGQPKGVIVEHRNVISLLKHQNLPFEFNHEDVWTLFHSYCFDFSVWEMFGALLNGSTLVVVSKETARDPQAFRLLLKKERVTVLNQTPTAFYGLMLEDQNHTDHLNIRYVIFGGEALQPGLLQSWNEKYPHTDLINMYGITETTVHVTFKKLSAADIAKNKSNIGRPLSTLQAHVMDAHMNLQPTGVPGELYIGGEGVARGYLNRDELTADRFVSNPYLPGDRLYRTGDLAKRLSNGELEYLGRIDEQVKVRGHRIELGEIQAALLQYPMIKEAAVITRADEQGQTAIYAYMVIKDQQAANISDIRTYLKNALPDFMLPARMIQIDSIPVTVNGKLDQKALPEPEKQAYTADDISPRNEIETVMAEIWEELLNVDELGVSANFFKLGGDSIKALQVCARLKQRGFETTVREMFEHQTLGELSARVRKDVRAIDQGPVEGEITWTPIQQWFFSQSLESHHFNQSVMIYRAERFDEAALRKVLKSLVTHHDALRIVCRHEDGRQVQINRGIDLSDEELYALELFDVKDSLTEARNTIEEAASRMQEHIRLETGPLLHAGLFRTENGDHLFLTIHHLVVDAVSWRILFEDFSTAYKQAVSGESIKLPQKTDSYLTYSQRIADYSISRQVQREAAYWDECENRHIQPIPKDNDAASNTFKDTEVIDFELSRHHTELLLTAAHKAYSTEMNDILLTALGLALQKWTGNNQFKISMEGHGRESYLEDIDISRTVGWFTSIYPVWLDMRDSDHKDKEERLGHLIKQTKDMLHRIPHKGAGYGVLKYISKRWGSQKNSPEISFNYLGQFDQDIQSNAFEVSDIKPGNEISPNWERPYALDISGAVSSGCLNMHIIYNRFQFEEKTIQTFSRHFKQTLENIIEHCTGKENQEWSASDFTDEDLTLDELSEIMGAVNKL.

The segment at 7 to 310 (IQDIYPLSHM…NTVPVRIRSA (304 aa)) is condensation 1. The segment at 7–1042 (IQDIYPLSHM…AVKLMSLKEH (1036 aa)) is domain 1 (tyrosine-activating). An adenylation 1 region spans residues 496–889 (TYRQLQVRAN…QAPGVKEAAV (394 aa)). A Carrier 1 domain is found at 965 to 1040 (APRTLIEADL…SMAVKLMSLK (76 aa)). Residue S1000 is modified to O-(pantetheine 4'-phosphoryl)serine. The condensation 2 stretch occupies residues 1052–1342 (QRDVYPLSFS…NTLAMRSKPE (291 aa)). The domain 2 (D-allo-threonine-activating) stretch occupies residues 1052-2553 (QRDVYPLSFS…DLTLDELSEI (1502 aa)). The adenylation 2 stretch occupies residues 1527 to 1927 (TYRDLNEKAE…QYPMIKEAAV (401 aa)). A Carrier 2 domain is found at 2006–2080 (SPRNEIETVM…ELSARVRKDV (75 aa)). S2041 bears the O-(pantetheine 4'-phosphoryl)serine mark. Residues 2088 to 2553 (VEGEITWTPI…DLTLDELSEI (466 aa)) are epimerization.

It belongs to the ATP-dependent AMP-binding enzyme family. Requires pantetheine 4'-phosphate as cofactor.

Its function is as follows. This protein is a multifunctional enzyme, able to activate and polymerize the amino acids Tyr and Thr as part of the biosynthesis of the lipopeptide antibiotic plipastatin. The Thr residue is further converted to the D-allo-isomer form. The activation sites for these amino acids consist of individual domains. The protein is Plipastatin synthase subunit B (ppsB) of Bacillus subtilis (strain 168).